The primary structure comprises 97 residues: uncharacterized protein (97 aa).

The first 16 residues, 1-16 (MKQTVLLLFTALFLSG), serve as a signal peptide directing secretion. Cys-17 carries N-palmitoyl cysteine lipidation. The S-diacylglycerol cysteine moiety is linked to residue Cys-17.

It is found in the cell membrane. This is an uncharacterized protein from Bacillus subtilis (strain 168).